A 277-amino-acid polypeptide reads, in one-letter code: Protein G1-like2 (277 aa).

Residues 1–16 (MQGGGGGDSSGGGGGE) are compositionally biased toward gly residues. Disordered regions lie at residues 1-28 (MQGGGGGDSSGGGGGEAPRPSRYESQKR), 141-203 (RGIA…GHFF), and 225-245 (HQVSNAGNGGNTNTNTNTNTG). Positions 19-28 (RPSRYESQKR) are enriched in basic and acidic residues. The region spanning 22–149 (RYESQKRRDW…ARGIAYEKKR (128 aa)) is the ALOG domain. Positions 147–151 (KKRRK) match the Nuclear localization signal motif. The segment covering 154 to 177 (PTSSSSSQAAAAAAAATSPASPAA) has biased composition (low complexity). Positions 178–187 (SPTPPPPPPT) are enriched in pro residues.

The protein belongs to the plant homeotic and developmental regulators ALOG protein family.

It is found in the nucleus. Probable transcription regulator that acts as a developmental regulator by promoting cell growth in response to light. This Oryza sativa subsp. japonica (Rice) protein is Protein G1-like2 (G1L2).